Here is a 490-residue protein sequence, read N- to C-terminus: Betaine aldehyde dehydrogenase (490 aa).

Asp-93 serves as a coordination point for K(+). An NAD(+)-binding site is contributed by 150–152 (GAW). The active-site Charge relay system is the Lys-162. Residue 176–179 (KPSE) participates in NAD(+) binding. Val-180 contributes to the K(+) binding site. NAD(+) is bound at residue 230–233 (GIAS). Leu-246 contributes to the K(+) binding site. Glu-252 (proton acceptor) is an active-site residue. NAD(+)-binding residues include Gly-254, Cys-286, and Glu-387. Cys-286 functions as the Nucleophile in the catalytic mechanism. Cys-286 is modified (cysteine sulfenic acid (-SOH)). K(+)-binding residues include Lys-457 and Gly-460. Catalysis depends on Glu-464, which acts as the Charge relay system.

It belongs to the aldehyde dehydrogenase family. Dimer of dimers. It depends on K(+) as a cofactor.

It catalyses the reaction betaine aldehyde + NAD(+) + H2O = glycine betaine + NADH + 2 H(+). The protein operates within amine and polyamine biosynthesis; betaine biosynthesis via choline pathway; betaine from betaine aldehyde: step 1/1. Functionally, involved in the biosynthesis of the osmoprotectant glycine betaine. Catalyzes the irreversible oxidation of betaine aldehyde to the corresponding acid. This chain is Betaine aldehyde dehydrogenase, found in Pectobacterium atrosepticum (strain SCRI 1043 / ATCC BAA-672) (Erwinia carotovora subsp. atroseptica).